A 403-amino-acid polypeptide reads, in one-letter code: D-galactonate dehydratase family member ManD (403 aa).

Asn37 and His122 together coordinate substrate. The Proton donor/acceptor role is filled by Tyr159. Mg(2+) is bound at residue Asp211. His213 (proton donor/acceptor) is an active-site residue. Positions 237 and 263 each coordinate Mg(2+). The substrate site is built by Glu263, Arg284, His313, Asp317, and Glu340.

The protein belongs to the mandelate racemase/muconate lactonizing enzyme family. GalD subfamily. The cofactor is Mg(2+).

The catalysed reaction is D-mannonate = 2-dehydro-3-deoxy-D-gluconate + H2O. It catalyses the reaction D-gluconate = 2-dehydro-3-deoxy-D-gluconate + H2O. In terms of biological role, has low dehydratase activity with D-mannonate and D-gluconate, suggesting that these are not physiological substrates and that it has no significant role in the in vivo degradation of these compounds. Has no detectable activity with a panel of 70 other acid sugars (in vitro). The sequence is that of D-galactonate dehydratase family member ManD (manD) from Chromohalobacter salexigens (strain ATCC BAA-138 / DSM 3043 / CIP 106854 / NCIMB 13768 / 1H11).